The following is a 101-amino-acid chain: NADH-quinone oxidoreductase subunit K (101 aa).

The next 3 helical transmembrane spans lie at 4 to 24, 30 to 50, and 61 to 81; these read LSHY…GIFL, IILL…FVAF, and IFVF…LAIL.

Belongs to the complex I subunit 4L family. NDH-1 is composed of 14 different subunits. Subunits NuoA, H, J, K, L, M, N constitute the membrane sector of the complex.

The protein resides in the cell inner membrane. It carries out the reaction a quinone + NADH + 5 H(+)(in) = a quinol + NAD(+) + 4 H(+)(out). Functionally, NDH-1 shuttles electrons from NADH, via FMN and iron-sulfur (Fe-S) centers, to quinones in the respiratory chain. The immediate electron acceptor for the enzyme in this species is believed to be ubiquinone. Couples the redox reaction to proton translocation (for every two electrons transferred, four hydrogen ions are translocated across the cytoplasmic membrane), and thus conserves the redox energy in a proton gradient. This chain is NADH-quinone oxidoreductase subunit K, found in Nitrosomonas eutropha (strain DSM 101675 / C91 / Nm57).